Reading from the N-terminus, the 300-residue chain is tRNA pseudouridine synthase A (300 aa).

The Nucleophile role is filled by aspartate 67. Tyrosine 125 provides a ligand contact to substrate.

It belongs to the tRNA pseudouridine synthase TruA family. In terms of assembly, homodimer.

The catalysed reaction is uridine(38/39/40) in tRNA = pseudouridine(38/39/40) in tRNA. Its function is as follows. Formation of pseudouridine at positions 38, 39 and 40 in the anticodon stem and loop of transfer RNAs. The chain is tRNA pseudouridine synthase A from Synechococcus sp. (strain CC9902).